The chain runs to 351 residues: Ceramide hydroxylase (351 aa).

Transmembrane regions (helical) follow at residues 26-46 (AAIYWADLTISAAVMWGGFLI), 47-67 (AATTSSLALGLGAALLSMLAL), 141-161 (GFLFIALLAPLGVILRSAILI), and 204-224 (VACWLWSWAVIAGLGLGVVPV).

It belongs to the fatty acid desaturase type 1 family.

The protein localises to the cell inner membrane. Its pathway is lipid metabolism; sphingolipid metabolism. Functionally, involved in de novo bacterial ceramide synthesis. The polypeptide is Ceramide hydroxylase (Caulobacter vibrioides (strain NA1000 / CB15N) (Caulobacter crescentus)).